Reading from the N-terminus, the 224-residue chain is UPF0111 protein CPn_0681/CP_0066/CPj0681/CpB0708 (224 aa).

It belongs to the UPF0111 family.

The sequence is that of UPF0111 protein CPn_0681/CP_0066/CPj0681/CpB0708 from Chlamydia pneumoniae (Chlamydophila pneumoniae).